An 884-amino-acid chain; its full sequence is E3 ubiquitin-protein ligase BRE1-like 1 (884 aa).

The segment at 1–37 (MGSTGEPDRKRRLSSSVAPGGGAPVSPAKRLAVAPTS) is disordered. Residues 49 to 86 (YKNQKLSEQLEAHKFEYRALENKFAGLKEKQRTHNETL) are a coiled coil. Residues 107-127 (KSGSPNSSPGSGHNNVQKDGT) form a disordered region. Residues 108–121 (SGSPNSSPGSGHNN) show a composition bias toward low complexity. Coiled coils occupy residues 216 to 541 (LNNV…ELKL), 580 to 663 (SKLE…LQQI), 696 to 762 (RNLQ…QSLD), and 789 to 827 (KKRI…KEYR). The RING-type zinc finger occupies 832–871 (CGICHDRQKEVVITKCYHLFCNQCIQKSLGNRQRRCPSCS).

Belongs to the BRE1 family.

The protein localises to the nucleus. It carries out the reaction S-ubiquitinyl-[E2 ubiquitin-conjugating enzyme]-L-cysteine + [acceptor protein]-L-lysine = [E2 ubiquitin-conjugating enzyme]-L-cysteine + N(6)-ubiquitinyl-[acceptor protein]-L-lysine.. Its pathway is protein modification; protein ubiquitination. Functionally, E3 ubiquitin-protein ligase that monoubiquitinates H2B to form H2BK143ub1. H2BK143ub1 gives a specific tag for epigenetic transcriptional activation and is also prerequisite for H3K4me and maybe H3K79me. It thereby plays a central role in histone code and gene regulation. Forms a ubiquitin ligase complex in cooperation with the E2 enzyme UBC2/RAD6. In Oryza sativa subsp. indica (Rice), this protein is E3 ubiquitin-protein ligase BRE1-like 1 (BRE1A).